The following is a 59-amino-acid chain: U-limacoditoxin(3)-Dv33 (59 aa).

The first 19 residues, 1 to 19 (MSKVILLCLIFALFACSIS), serve as a signal peptide directing secretion.

Belongs to the limacoditoxin-3 family. Post-translationally, the natural peptide is not amidated. The recombinant peptide is amidated. In terms of tissue distribution, expressed by the venom secretory cell of the spine. The spine is a cuticular structure containing a single large nucleated venom-secreting cell at its base. It is an independent unit capable of producing, storing and injecting venom. On the back of D.vulnerans caterpillars, spines are grouped together by 50 to 100 to form scoli, of which there are eight in D.vulnerans.

The protein localises to the secreted. Probable toxin. Shows a relatively potent antiparasitic activity against the major pathogenic nematode of ruminants (H.contortus, EC(50)=2.6 uM). Does not show insecticidal and antimicrobial activities. Does not induce increase in intracellular calcium in mouse DRG neurons, suggesting that it does not induce pain. The sequence is that of U-limacoditoxin(3)-Dv33 from Doratifera vulnerans (Mottled cup moth).